The chain runs to 432 residues: UDP-glucosyltransferase B1 (432 aa).

This sequence belongs to the UDP-glycosyltransferase family.

The enzyme catalyses (9Z)-17-hydroxyoctadec-9-enoate 17-O-beta-D-glucoside + UDP-alpha-D-glucose = (9Z)-17-hydroxyoctadec-9-enoate 17-O-sophoroside + UDP + H(+). Its function is as follows. Catalyzes the second glycosylation step of sophorolipid biosynthesis, the further glucosylation of the previoulsy formed glucolipid to give rise to an acidic sophorolipid. The chain is UDP-glucosyltransferase B1 from Starmerella bombicola (Yeast).